The primary structure comprises 253 residues: Probable transcriptional regulatory protein RPR_05505 (253 aa).

Belongs to the TACO1 family.

It localises to the cytoplasm. This Rickettsia peacockii (strain Rustic) protein is Probable transcriptional regulatory protein RPR_05505.